We begin with the raw amino-acid sequence, 197 residues long: TATA-box-binding protein (197 aa).

A run of 2 repeats spans residues I10 to L86 and I101 to L177.

Belongs to the TBP family.

Its function is as follows. General factor that plays a role in the activation of archaeal genes transcribed by RNA polymerase. Binds specifically to the TATA box promoter element which lies close to the position of transcription initiation. The polypeptide is TATA-box-binding protein (Pyrobaculum neutrophilum (strain DSM 2338 / JCM 9278 / NBRC 100436 / V24Sta) (Thermoproteus neutrophilus)).